The chain runs to 175 residues: DASH complex subunit DAM1 (175 aa).

A disordered region spans residues 1–39 (MAPEDTNPQSSHRRTRSTSRSRPTTPLRPSSRSSFRSSA). Positions 20-39 (RSRPTTPLRPSSRSSFRSSA) are enriched in low complexity.

Belongs to the DASH complex DAM1 family. As to quaternary structure, component of the DASH complex consisting of ASK1, DAD1, DAD2, DAD3, DAD4, DAM1, DUO1, HSK3, SPC19 and SPC34, with a stoichiometry of one copy of each subunit per complex. Multiple DASH complexes oligomerize to form a ring that encircles spindle microtubules and organizes the rod-like NDC80 complexes of the outer kinetochore. DASH complex oligomerization strengthens microtubule attachments. On cytoplasmic microtubules, DASH complexes appear to form patches instead of rings.

It is found in the chromosome. Its subcellular location is the centromere. The protein resides in the kinetochore. It localises to the cytoplasm. The protein localises to the cytoskeleton. It is found in the spindle. Its subcellular location is the nucleus. In terms of biological role, component of the DASH complex that connects microtubules with kinetochores and couples microtubule depolymerisation to chromosome movement; it is involved in retrieving kinetochores to the spindle poles before their re-orientation on the spindle in early mitosis and allows microtubule depolymerization to pull chromosomes apart and resist detachment during anaphase. Kinetochores, consisting of a centromere-associated inner segment and a microtubule-contacting outer segment, play a crucial role in chromosome segregation by mediating the physical connection between centromeric DNA and microtubules. Kinetochores also serve as an input point for the spindle assembly checkpoint, which delays anaphase until all chromosomes have bioriented on the mitotic spindle. This Chaetomium thermophilum (strain DSM 1495 / CBS 144.50 / IMI 039719) (Thermochaetoides thermophila) protein is DASH complex subunit DAM1.